Here is a 404-residue protein sequence, read N- to C-terminus: MSDSKEPSVQQLGLLEEEQLRGLGFRQTRGYKSLAGCLGHGALVLQLLSFTLLAGLLIQVSKFPSSISQEQSKQDAIYQNLTQLKAAVGELSEKSKLQEIYQELTQLKAAVGELPEKSKQQEIYQELTQLKAAVGELPEKSKQQEIYQELTQLKAAVGELPEKSKQQEIYQELTRLKAAVGELPEKSQQQEIYQELTQLKAAVGELPEKSKQQEIYQELTRLKAAVGELPEKSKQQEIYQELTQLKAAVERLCRPCPWEWTFFQGNCYFMSNSQRDWHDSVTACQEVGAQLVVIKSAEEQNFLQLQSSRSNRFAWMGLSDLNQEGTWQWVDGSPLSPSFKQYWNRGEPNNVGEEDCAEFSGNGWNDDKCNLAKFWICKKSAASCSRDEEQFLSPAPATPNPPPA.

The Cytoplasmic portion of the chain corresponds to 1 to 37 (MSDSKEPSVQQLGLLEEEQLRGLGFRQTRGYKSLAGC). Short sequence motifs (endocytosis signal) lie at residues 14-15 (LL), 16-18 (EEE), and 31-34 (YKSL). A helical; Signal-anchor for type II membrane protein transmembrane segment spans residues 38-58 (LGHGALVLQLLSFTLLAGLLI). Residues 59 to 404 (QVSKFPSSIS…APATPNPPPA (346 aa)) lie on the Extracellular side of the membrane. The N-linked (GlcNAc...) asparagine glycan is linked to N80. 7 repeat units span residues 96 to 118 (KLQE…PEKS), 119 to 141 (KQQE…PEKS), 142 to 164 (KQQE…PEKS), 165 to 187 (KQQE…PEKS), 188 to 210 (QQQE…PEKS), 211 to 233 (KQQE…PEKS), and 234 to 257 (KQQE…RPCP). The tract at residues 96–257 (KLQEIYQELT…AVERLCRPCP (162 aa)) is 7 X approximate tandem repeats. Cystine bridges form between C256–C267, C284–C377, and C356–C369. One can recognise a C-type lectin domain in the interval 263-378 (FQGNCYFMSN…CNLAKFWICK (116 aa)). Ca(2+) is bound by residues E347, N349, V351, E354, N365, and D366.

As to quaternary structure, homotetramer. Interacts with C1QBP; the interaction is indicative for a C1q:C1QBP:CD209 signaling complex. Interacts with ICAM2 and ICAM3 by binding to mannose-like carbohydrates. Interacts (via C-type lectin domain) with CEACAM1 (via Lewis X moieties); this interaction is regulated by the glycosylation pattern of CEACAM1 on cell types and regulates contact between dendritic cells and neutrophils.

The protein localises to the membrane. Its function is as follows. Pathogen-recognition receptor expressed on the surface of immature dendritic cells (DCs) and involved in initiation of primary immune response. Thought to mediate the endocytosis of pathogens which are subsequently degraded in lysosomal compartments. The receptor returns to the cell membrane surface and the pathogen-derived antigens are presented to resting T-cells via MHC class II proteins to initiate the adaptive immune response. Probably recognizes in a calcium-dependent manner high mannose N-linked oligosaccharides in a variety of pathogen antigens. In terms of biological role, on DCs it is a high affinity receptor for ICAM2 and ICAM3 by binding to mannose-like carbohydrates. May act as a DC rolling receptor that mediates transendothelial migration of DC presursors from blood to tissues by binding endothelial ICAM2. Seems to regulate DC-induced T-cell proliferation by binding to ICAM3 on T-cells in the immunological synapse formed between DC and T-cells. The polypeptide is CD209 antigen (CD209) (Nomascus concolor (Black crested gibbon)).